A 278-amino-acid polypeptide reads, in one-letter code: Diaminopimelate epimerase (278 aa).

The substrate site is built by Asn-13, Gln-46, and Asn-66. Cys-75 serves as the catalytic Proton donor. Substrate-binding positions include 76–77, Asn-159, Asn-192, and 210–211; these read GN and ER. Catalysis depends on Cys-219, which acts as the Proton acceptor. 220-221 contributes to the substrate binding site; sequence GT.

This sequence belongs to the diaminopimelate epimerase family. In terms of assembly, homodimer.

It localises to the cytoplasm. The enzyme catalyses (2S,6S)-2,6-diaminopimelate = meso-2,6-diaminopimelate. It functions in the pathway amino-acid biosynthesis; L-lysine biosynthesis via DAP pathway; DL-2,6-diaminopimelate from LL-2,6-diaminopimelate: step 1/1. Catalyzes the stereoinversion of LL-2,6-diaminopimelate (L,L-DAP) to meso-diaminopimelate (meso-DAP), a precursor of L-lysine and an essential component of the bacterial peptidoglycan. The sequence is that of Diaminopimelate epimerase from Laribacter hongkongensis (strain HLHK9).